A 397-amino-acid polypeptide reads, in one-letter code: NADH-quinone oxidoreductase subunit H (397 aa).

Transmembrane regions (helical) follow at residues 7–27 (ALLITLLKAVLVALALLTAFA), 78–98 (LVYTLAPILAIGMALTAFGGI), 120–140 (ILALLALTSMGVYGIFLGGWA), 164–184 (MGLSVLGLLMLVGSTNFLDIV), 195–215 (WLILFQVFAFALFMVSSFAEV), 247–267 (MAEYVNIMTASALMSTLFFGG), 283–303 (SWPLVWLIAKIAFFMFLFIWV), 322–342 (LTLPLALVNTLVVAAVLAFVP), and 353–373 (WLLGAVSLLLLLILFAASDAV).

Belongs to the complex I subunit 1 family. NDH-1 is composed of 15 different subunits. Subunits NuoA, H, J, K, L, M, N constitute the membrane sector of the complex.

The protein localises to the cell membrane. It carries out the reaction a quinone + NADH + 5 H(+)(in) = a quinol + NAD(+) + 4 H(+)(out). Its function is as follows. NDH-1 shuttles electrons from NADH, via FMN and iron-sulfur (Fe-S) centers, to quinones in the respiratory chain. The immediate electron acceptor for the enzyme in this species is believed to be ubiquinone. Couples the redox reaction to proton translocation (for every two electrons transferred, four hydrogen ions are translocated across the cytoplasmic membrane), and thus conserves the redox energy in a proton gradient. This subunit may bind ubiquinone. This is NADH-quinone oxidoreductase subunit H from Deinococcus radiodurans (strain ATCC 13939 / DSM 20539 / JCM 16871 / CCUG 27074 / LMG 4051 / NBRC 15346 / NCIMB 9279 / VKM B-1422 / R1).